The sequence spans 354 residues: AT-rich binding protein (354 aa).

Residues 31 to 54 (IVCHTCQEELQTQDKFWKHIQDEH) form a C2H2-type 1 zinc finger. Disordered regions lie at residues 84–124 (LPLY…HDDQ) and 256–276 (EVQQ…SSAM). 2 stretches are compositionally biased toward basic and acidic residues: residues 89 to 100 (KVSENDQQRDDV) and 109 to 124 (QKEP…HDDQ). Residues 264–276 (TNNSTTASASSAM) show a composition bias toward low complexity. 2 C2H2-type zinc fingers span residues 285–309 (YICD…RSVH) and 315–338 (FACE…KKKH).

In terms of assembly, homooctamer. Fat body.

Its subcellular location is the nucleus. May be a transcription factor for genes having (A+T) stretches in their promoter and/or enhancer regions. Binds to AT rich DNA. This Sarcophaga peregrina (Flesh fly) protein is AT-rich binding protein.